The primary structure comprises 261 residues: Putative hydro-lyase SSP0308 (261 aa).

The protein belongs to the D-glutamate cyclase family.

The protein is Putative hydro-lyase SSP0308 of Staphylococcus saprophyticus subsp. saprophyticus (strain ATCC 15305 / DSM 20229 / NCIMB 8711 / NCTC 7292 / S-41).